Consider the following 426-residue polypeptide: Serine hydroxymethyltransferase (426 aa).

(6S)-5,6,7,8-tetrahydrofolate is bound by residues Leu113 and 117 to 119 (GHL). At Lys222 the chain carries N6-(pyridoxal phosphate)lysine. Residue 363–365 (SAF) coordinates (6S)-5,6,7,8-tetrahydrofolate.

Belongs to the SHMT family. In terms of assembly, homodimer. Requires pyridoxal 5'-phosphate as cofactor.

The protein resides in the cytoplasm. It carries out the reaction (6R)-5,10-methylene-5,6,7,8-tetrahydrofolate + glycine + H2O = (6S)-5,6,7,8-tetrahydrofolate + L-serine. It functions in the pathway one-carbon metabolism; tetrahydrofolate interconversion. Its pathway is amino-acid biosynthesis; glycine biosynthesis; glycine from L-serine: step 1/1. Functionally, catalyzes the reversible interconversion of serine and glycine with tetrahydrofolate (THF) serving as the one-carbon carrier. This reaction serves as the major source of one-carbon groups required for the biosynthesis of purines, thymidylate, methionine, and other important biomolecules. Also exhibits THF-independent aldolase activity toward beta-hydroxyamino acids, producing glycine and aldehydes, via a retro-aldol mechanism. This Bacteroides fragilis (strain ATCC 25285 / DSM 2151 / CCUG 4856 / JCM 11019 / LMG 10263 / NCTC 9343 / Onslow / VPI 2553 / EN-2) protein is Serine hydroxymethyltransferase.